The primary structure comprises 301 residues: Bifunctional protein FolD (301 aa).

Residues 166-168 (GKS), serine 191, and isoleucine 232 each bind NADP(+).

It belongs to the tetrahydrofolate dehydrogenase/cyclohydrolase family. Homodimer.

It carries out the reaction (6R)-5,10-methylene-5,6,7,8-tetrahydrofolate + NADP(+) = (6R)-5,10-methenyltetrahydrofolate + NADPH. It catalyses the reaction (6R)-5,10-methenyltetrahydrofolate + H2O = (6R)-10-formyltetrahydrofolate + H(+). Its pathway is one-carbon metabolism; tetrahydrofolate interconversion. In terms of biological role, catalyzes the oxidation of 5,10-methylenetetrahydrofolate to 5,10-methenyltetrahydrofolate and then the hydrolysis of 5,10-methenyltetrahydrofolate to 10-formyltetrahydrofolate. The sequence is that of Bifunctional protein FolD from Orientia tsutsugamushi (strain Ikeda) (Rickettsia tsutsugamushi).